The following is a 311-amino-acid chain: Formimidoylglutamase (311 aa).

Mn(2+) is bound by residues His-130, Asp-155, His-157, Asp-159, Cys-242, and Asp-244.

It belongs to the arginase family. Mn(2+) is required as a cofactor.

The catalysed reaction is N-formimidoyl-L-glutamate + H2O = formamide + L-glutamate. It functions in the pathway amino-acid degradation; L-histidine degradation into L-glutamate; L-glutamate from N-formimidoyl-L-glutamate (hydrolase route): step 1/1. Catalyzes the conversion of N-formimidoyl-L-glutamate to L-glutamate and formamide. The sequence is that of Formimidoylglutamase from Staphylococcus aureus (strain Mu3 / ATCC 700698).